The following is a 391-amino-acid chain: Zinc finger protein ubi-d4 (391 aa).

N-acetylalanine is present on Ala2. Glycyl lysine isopeptide (Lys-Gly) (interchain with G-Cter in SUMO2) cross-links involve residues Lys10, Lys99, Lys107, and Lys108. Disordered regions lie at residues 79 to 146 and 165 to 196; these read WRKK…LGEF and DDLD…ARKK. Composition is skewed to basic and acidic residues over residues 100–110 and 126–140; these read PDTDQTLKKEG and DPLE…RVDD. Ser142 is subject to Phosphoserine. A compositionally biased stretch (acidic residues) spans 165–174; the sequence is DDLDDEDYEE. Tyr172 carries the post-translational modification Phosphotyrosine. A Phosphothreonine modification is found at Thr176. Glycyl lysine isopeptide (Lys-Gly) (interchain with G-Cter in SUMO2) cross-links involve residues Lys178 and Lys196. Ser200 bears the Phosphoserine mark. Residues 209–232 form a C2H2-type zinc finger; that stretch reads YACDICGKRYKNRPGLSYHYAHSH. The interval 233–266 is disordered; it reads LAEEEGEDKEDSQPPTPVSQRSEEQKSKKGPDGL. Ser244 carries the post-translational modification Phosphoserine. Residues 253–263 are compositionally biased toward basic and acidic residues; sequence RSEEQKSKKGP. 2 PHD-type zinc fingers span residues 270-330 and 327-377; these read NNYC…CKCC and CKCC…CLDL. Residue Ser280 is modified to Phosphoserine. Lys281 is covalently cross-linked (Glycyl lysine isopeptide (Lys-Gly) (interchain with G-Cter in SUMO2)).

Belongs to the requiem/DPF family. As to quaternary structure, interacts with the nucleosomes, in particular nucleosomes bearing histone H3 crotonylated at 'Lys-14' (H3K14cr) for which DPF2 has high affinity. Also interacts (via PHD-type zinc finger domains) with histone H3 butyrylated at 'Lys-14' (H3K14bu), histone H3 propionylated at 'Lys-14' (H3K14pr), and histone H3 acetylated at 'Lys-14' (H3K14ac). Interacts with histone H3 acetylated at 'Lys-9' (H3K9ac), histone H3 di-methylated at 'Lys-9' (H3K9me2), and histone H3 tri-methylated at 'Lys-9' (H3K9me3). Interacts with histone H4 acetylated at 'Lys-12' (H4K12ac). Interacts with histone H4 acetylated at 'Lys-16' (H4K16ac). Interacts with SWI/SNF complex components. Interacts with SMARCA2, SMARCA4, SMARCB1 and SMARCD1. Interacts with SMARCC1, SMARCC2 and ACTL6A. Interacts with RUNX1. Ubiquitous.

The protein localises to the nucleus. Its subcellular location is the cytoplasm. Functionally, plays an active role in transcriptional regulation by binding modified histones H3 and H4. Is a negative regulator of myeloid differentiation of hematopoietic progenitor cells. Might also have a role in the development and maturation of lymphoid cells. Involved in the regulation of non-canonical NF-kappa-B pathway. In Homo sapiens (Human), this protein is Zinc finger protein ubi-d4 (DPF2).